A 1726-amino-acid chain; its full sequence is Transcription elongation factor SPT6 (1726 aa).

Acidic residues-rich tracts occupy residues 1–14, 32–49, and 59–80; these read MSDF…ESEE, EEED…DDQD, and NDDD…DSED. A disordered region spans residues 1–197; that stretch reads MSDFVESEAE…DDGQPLKKPK (197 aa). Ser2 is subject to N-acetylserine. Residues 2–485 form an interaction with IWS1 region; the sequence is SDFVESEAEE…PKMQNAAKAS (484 aa). An interaction with PAAF1 region spans residues 2 to 916; it reads SDFVESEAEE…PPVLRQAVSL (915 aa). Residues 3 to 51 adopt a coiled-coil conformation; that stretch reads DFVESEAEESEEEYNHEGEVVPRVTKKFVEEEDDDEEEEEENLDDQDER. Phosphoserine occurs at positions 7 and 12. 3 positions are modified to phosphoserine: Ser73, Ser78, and Ser91. Over residues 95-105 the composition is skewed to acidic residues; it reads RLEDDDFDLIE. Residues 111–122 show a composition bias toward basic residues; that stretch reads KVKRGQKYRRVK. Ser125 is subject to Phosphoserine. Composition is skewed to acidic residues over residues 126–136, 150–160, and 169–190; these read DDDEDDEEEYG, FQDEEGEEGQE, and PDEE…DDDG. The residue at position 267 (Ser267) is a Phosphoserine. The tract at residues 317-1300 is interaction with KDM6A; the sequence is ADWIYRNAFA…NEWKLPKDTY (984 aa). Residues 489 to 520 form a disordered region; the sequence is LKRIKEDGDEEGEGEEAEDEEQRGPELKQASR. Residues 495-509 are compositionally biased toward acidic residues; sequence DGDEEGEGEEAEDEE. The segment covering 510 to 520 has biased composition (basic and acidic residues); sequence QRGPELKQASR. Lys743 carries the N6-acetyllysine modification. Residues 1213-1282 enclose the S1 motif domain; that stretch reads WNHFDSGSCP…EKFSADLTCR (70 aa). The SH2 domain maps to 1325 to 1431; that stretch reads YIKRVIAHPS…FARDLLNHKY (107 aa). Phosphotyrosine is present on Tyr1515. Residue Thr1523 is modified to Phosphothreonine. Ser1526 is modified (phosphoserine). A phosphothreonine mark is found at Thr1530 and Thr1532. Position 1535 is a phosphoserine (Ser1535). The residue at position 1539 (Thr1539) is a Phosphothreonine. Positions 1633-1726 are interaction with histone H2B and H3; it reads PQYHQLQAST…ATPLLDEMDR (94 aa). Residues 1636-1726 are disordered; the sequence is HQLQASTTPQ…ATPLLDEMDR (91 aa). A compositionally biased stretch (low complexity) spans 1639-1664; it reads QASTTPQSTQAQPQPSSSSRQRQQQP. Lys1676 carries the post-translational modification N6-acetyllysine. Position 1697 is a phosphothreonine (Thr1697). Residues Ser1701 and Ser1703 each carry the phosphoserine modification. Residues Thr1709 and Thr1718 each carry the phosphothreonine modification.

Belongs to the SPT6 family. Interacts with RNA polymerase II and the DRB sensitivity-inducing factor complex (DSIF complex), which is composed of SUPT5H and SUPT4H1 or SUPT4H2. Interacts with PAAF1. Interacts with histone H2B and H3. Interacts (via SH2 domain) with POLR2A phosphorylated at 'Ser-2'. Interacts (via SH2 domain) with SETD1A. Interacts with IWS1, KDM6A and AICDA. Interacts with WDR43. Dephosphorylated at Ser-1530 by the PNUTS-PP1 complex during RNA polymerase II transcription pause-release. Ubiquitously expressed.

The protein localises to the nucleus. Functionally, histone H3-H4 chaperone that plays a key role in the regulation of transcription elongation and mRNA processing. Enhances the transcription elongation by RNA polymerase II (RNAPII) and is also required for the efficient activation of transcriptional elongation by the HIV-1 nuclear transcriptional activator, Tat. Besides chaperoning histones in transcription, acts to transport and splice mRNA by forming a complex with IWS1 and the C-terminal domain (CTD) of the RNAPII subunit RPB1 (POLR2A). The SUPT6H:IWS1:CTD complex recruits mRNA export factors (ALYREF/THOC4, EXOSC10) as well as histone modifying enzymes (such as SETD2), to ensure proper mRNA splicing, efficient mRNA export and elongation-coupled H3K36 methylation, a signature chromatin mark of active transcription. SUPT6H via its association with SETD1A, regulates both class-switch recombination and somatic hypermutation through formation of H3K4me3 epigenetic marks on activation-induced cytidine deaminase (AICDA) target loci. Promotes the activation of the myogenic gene program by entailing erasure of the repressive H3K27me3 epigenetic mark through stabilization of the chromatin interaction of the H3K27 demethylase KDM6A. The sequence is that of Transcription elongation factor SPT6 (Supt6h) from Mus musculus (Mouse).